The primary structure comprises 327 residues: MEAIKGSDVNVPDAVFAWLLDGHGGVKPLEDNDVIDSQHPCWLHLNYTHPDSARWLASTPLLPNNVRDALAGESSRPRVSRMGEGTLITLRCINGSTDERPDQLVAMRLYMDERFIVSTRQRKVLALDDVVSDLQEGTGPVDCGGWLVDVCDALTDHASEFIEELHDKIIDLEDNLLDQQIPPRGFLALLRKQLIVMRRYMAPQRDVYARLASERLPWMSDDHRRRMQDIADRLGRGLDEIDACIARTGIMADEIAQVMQESLARRTYTMSLMAMVFLPSTFLTGLFGVNLGGIPGGGWRFGFSLFCILLVVLIGGVTLWLHRSKWL.

Topologically, residues 1 to 273 are cytoplasmic; that stretch reads MEAIKGSDVN…ARRTYTMSLM (273 aa). Residues 274-294 traverse the membrane as a helical segment; it reads AMVFLPSTFLTGLFGVNLGGI. The Periplasmic segment spans residues 295–300; it reads PGGGWR. Residues 301–321 traverse the membrane as a helical segment; sequence FGFSLFCILLVVLIGGVTLWL. The Cytoplasmic portion of the chain corresponds to 322-327; it reads HRSKWL.

This sequence belongs to the CorA metal ion transporter (MIT) (TC 1.A.35) family.

The protein resides in the cell inner membrane. It carries out the reaction Zn(2+)(out) + H(+)(out) = Zn(2+)(in) + H(+)(in). Its function is as follows. Zinc transporter. Acts as a Zn(2+):proton symporter, which likely mediates zinc ion uptake. This chain is Zinc transport protein ZntB, found in Salmonella choleraesuis (strain SC-B67).